Here is a 972-residue protein sequence, read N- to C-terminus: SWI/SNF-related matrix-associated actin-dependent regulator of chromatin subfamily A containing DEAD/H box 1A (972 aa).

Disordered regions lie at residues Asn-15–Gln-76, Asp-125–Glu-177, and Ser-217–Ile-333. Basic and acidic residues-rich tracts occupy residues Lys-22–Asp-42 and Glu-63–Ala-72. Residues Asp-82–Asp-127 form the CUE 1 domain. The span at Ser-128–Ser-138 shows a compositional bias: basic and acidic residues. A compositionally biased stretch (acidic residues) spans Ser-156 to Glu-169. One can recognise a CUE 2 domain in the interval Lys-175–Ser-218. Over residues His-237 to Thr-246 the composition is skewed to basic and acidic residues. Residues Gln-247–Ser-263 show a composition bias toward polar residues. A compositionally biased stretch (low complexity) spans Lys-279 to Ser-290. Acidic residues predominate over residues Ala-307–Ser-332. The region spanning Ile-460–Ser-628 is the Helicase ATP-binding domain. Residue Asp-473–Thr-480 coordinates ATP. Positions Asp-579–His-582 match the DEGH box motif. The 162-residue stretch at Leu-805–Leu-966 folds into the Helicase C-terminal domain.

Belongs to the SNF2/RAD54 helicase family.

The protein resides in the nucleus. It localises to the chromosome. It carries out the reaction ATP + H2O = ADP + phosphate + H(+). DNA helicase that possesses intrinsic ATP-dependent nucleosome-remodeling activity and is both required for DNA repair and heterochromatin organization. Promotes DNA end resection of double-strand breaks (DSBs) following DNA damage: probably acts by weakening histone DNA interactions in nucleosomes flanking DSBs. Required for the restoration of heterochromatin organization after replication. The protein is SWI/SNF-related matrix-associated actin-dependent regulator of chromatin subfamily A containing DEAD/H box 1A (smarcad1a) of Danio rerio (Zebrafish).